The sequence spans 221 residues: uncharacterized protein (221 aa).

The span at 1–11 (MGEKSRRKGPA) shows a compositional bias: basic residues. 2 disordered regions span residues 1–23 (MGEK…GRTC) and 139–169 (SNFQ…SAPE). Basic and acidic residues-rich tracts occupy residues 13 to 23 (RHADGKLGRTC) and 155 to 168 (DKRS…RSAP).

This is an uncharacterized protein from Homo sapiens (Human).